The following is a 557-amino-acid chain: MAHTKIPTALHEQENFLPKKKLIIVILTLGVVLFVINIDHNGLSTLLPTIAEDLGAQKSITWAGSSQLIATTVFSVLYGRLSDIFGRKALFVSALWVFSIAELGCGFATSPKMLYAMRALTGASGGGIGNLSIIIATDVVSLRHRGQYMAVVAPFMVLGNICGPLVAAGVAKSPLTWRGLFWLISPLGVLSAVLAGYILPSTTPTDTFKQNLVKVDWLGSFTSTIAIVGFMVAVSGPGAYHAGYSLLVISLLSVSGVAFLAFLFIEWKLATLPVIPLTIFAIPDVSALLMQTFTLGWVNQANVYFVPIYAQNLRQWSPVISGVLLFPIIAVQVVVSMIAGRWMSKSGQYGLTIRLGVALLLIGSLLETKFGRETHPAYVIIVLLVIGIGVGAANQPMVIAMQAHTKKSERAVVTSSRNFFRFLGSACGVVMSAAILQSTLRTSLPAAYKHLADSPYALAGLNPRERDAIAPAYERAIRHVYIASAAASVLCSLGLFVWKDDGYESRPTENNDDIEHAPARGIEREDEQSSLIYDREPSAVSYGTVEAGEPNRLRRGG.

Helical transmembrane passes span 22–42, 59–79, 89–109, 120–140, 150–170, 179–199, 217–237, 245–265, 269–289, 319–339, 346–366, 379–399, 419–439, and 479–499; these read LIIV…DHNG, SITW…VLYG, ALFV…GFAT, LTGA…TDVV, AVVA…AAGV, GLFW…GYIL, WLGS…VSGP, SLLV…FLFI, LATL…SALL, VISG…SMIA, SGQY…GSLL, VIIV…PMVI, FFRF…LQST, and HVYI…FVWK. Residues 505-523 show a composition bias toward basic and acidic residues; the sequence is SRPTENNDDIEHAPARGIE. The disordered stretch occupies residues 505-557; the sequence is SRPTENNDDIEHAPARGIEREDEQSSLIYDREPSAVSYGTVEAGEPNRLRRGG.

Belongs to the major facilitator superfamily. TCR/Tet family.

The protein localises to the membrane. In terms of biological role, MFS-type transporter; part of the gene cluster that mediates the biosynthesis of squalestatin S1 (SQS1, also known as zaragozic acid A), a heavily oxidized fungal polyketide that offers potent cholesterol lowering activity by targeting squalene synthase (SS). In Cochliobolus lunatus (Filamentous fungus), this protein is MFS-type transporter clz4.